The following is a 319-amino-acid chain: Acetyl-coenzyme A carboxylase carboxyl transferase subunit alpha (319 aa).

The 262-residue stretch at 35 to 296 (NIDEEVHRLR…KAQLLADLAD (262 aa)) folds into the CoA carboxyltransferase C-terminal domain.

This sequence belongs to the AccA family. In terms of assembly, acetyl-CoA carboxylase is a heterohexamer composed of biotin carboxyl carrier protein (AccB), biotin carboxylase (AccC) and two subunits each of ACCase subunit alpha (AccA) and ACCase subunit beta (AccD).

Its subcellular location is the cytoplasm. It catalyses the reaction N(6)-carboxybiotinyl-L-lysyl-[protein] + acetyl-CoA = N(6)-biotinyl-L-lysyl-[protein] + malonyl-CoA. It functions in the pathway lipid metabolism; malonyl-CoA biosynthesis; malonyl-CoA from acetyl-CoA: step 1/1. Functionally, component of the acetyl coenzyme A carboxylase (ACC) complex. First, biotin carboxylase catalyzes the carboxylation of biotin on its carrier protein (BCCP) and then the CO(2) group is transferred by the carboxyltransferase to acetyl-CoA to form malonyl-CoA. This Citrobacter koseri (strain ATCC BAA-895 / CDC 4225-83 / SGSC4696) protein is Acetyl-coenzyme A carboxylase carboxyl transferase subunit alpha.